Consider the following 515-residue polypeptide: 2,3-bisphosphoglycerate-independent phosphoglycerate mutase (515 aa).

Mn(2+) is bound by residues aspartate 14 and serine 64. Serine 64 (phosphoserine intermediate) is an active-site residue. Substrate is bound by residues histidine 125, arginine 155–aspartate 156, arginine 187, arginine 193, arginine 263–arginine 266, and lysine 337. Mn(2+)-binding residues include aspartate 404, histidine 408, aspartate 445, histidine 446, and histidine 464.

Belongs to the BPG-independent phosphoglycerate mutase family. As to quaternary structure, monomer. Mn(2+) is required as a cofactor.

The enzyme catalyses (2R)-2-phosphoglycerate = (2R)-3-phosphoglycerate. It functions in the pathway carbohydrate degradation; glycolysis; pyruvate from D-glyceraldehyde 3-phosphate: step 3/5. Its function is as follows. Catalyzes the interconversion of 2-phosphoglycerate and 3-phosphoglycerate. This chain is 2,3-bisphosphoglycerate-independent phosphoglycerate mutase, found in Yersinia pseudotuberculosis serotype O:1b (strain IP 31758).